Here is a 1154-residue protein sequence, read N- to C-terminus: PDZ domain-containing protein 8 (1154 aa).

A helical transmembrane segment spans residues glycine 2–phenylalanine 24. A disordered region spans residues aspartate 66–proline 90. A compositionally biased stretch (low complexity) spans serine 70 to glutamate 85. Residues threonine 91–proline 294 enclose the SMP-LTD domain. The 84-residue stretch at threonine 366–valine 449 folds into the PDZ domain. Phosphoserine is present on residues serine 496, serine 521, and serine 538. Residues glycine 548–proline 612 are disordered. The Phorbol-ester/DAG-type zinc-finger motif lies at lysine 840–cysteine 891. The tract at residues arginine 955 to isoleucine 999 is disordered. Serine 967 and serine 980 each carry phosphoserine. Polar residues predominate over residues asparagine 988–glycine 998. Residues proline 1028–glutamate 1063 adopt a coiled-coil conformation. A compositionally biased stretch (polar residues) spans serine 1132–serine 1144. Residues serine 1132–valine 1154 are disordered.

As to quaternary structure, interacts with MSN. In terms of assembly, (Microbial infection) Interacts with HIV-1 Gag polyprotein p55.

It is found in the endoplasmic reticulum membrane. In terms of biological role, molecular tethering protein that connects endoplasmic reticulum and mitochondria membranes. PDZD8-dependent endoplasmic reticulum-mitochondria membrane tethering is essential for endoplasmic reticulum-mitochondria Ca(2+) transfer. In neurons, involved in the regulation of dendritic Ca(2+) dynamics by regulating mitochondrial Ca(2+) uptake in neurons. Plays an indirect role in the regulation of cell morphology and cytoskeletal organization. May inhibit herpes simplex virus 1 infection at an early stage. This chain is PDZ domain-containing protein 8, found in Homo sapiens (Human).